The sequence spans 143 residues: HTH-type transcriptional regulator MntR (143 aa).

The region spanning 1 to 63 (MPTPSMEDYL…YERYRGLVLT (63 aa)) is the HTH dtxR-type domain. Mn(2+) contacts are provided by D8, E11, H77, E99, E102, and H103.

This sequence belongs to the DtxR/MntR family. In terms of assembly, homodimer.

It is found in the cytoplasm. DNA binding is strongly activated by Mn(2+). Functionally, central regulator of manganese homeostasis. The polypeptide is HTH-type transcriptional regulator MntR (Shouchella clausii (strain KSM-K16) (Alkalihalobacillus clausii)).